The primary structure comprises 474 residues: UDP glycosyltransferase 9 (474 aa).

UDP-alpha-D-glucose is bound by residues serine 296, 349-350, 367-375, and 389-392; these read WC, HCGWNSTLE, and WADQ.

Belongs to the UDP-glycosyltransferase family.

This Catharanthus roseus (Madagascar periwinkle) protein is UDP glycosyltransferase 9.